We begin with the raw amino-acid sequence, 82 residues long: Large ribosomal subunit protein bL31B (82 aa).

Belongs to the bacterial ribosomal protein bL31 family. Type B subfamily. Part of the 50S ribosomal subunit.

The protein is Large ribosomal subunit protein bL31B of Pectobacterium atrosepticum (strain SCRI 1043 / ATCC BAA-672) (Erwinia carotovora subsp. atroseptica).